The sequence spans 465 residues: Ras GTPase-activating protein-binding protein 1 (465 aa).

An NTF2 domain is found at Val-11–Tyr-133. Residues Lys-36, Lys-50, Lys-59, Lys-64, Lys-76, and Lys-123 each participate in a glycyl lysine isopeptide (Lys-Gly) (interchain with G-Cter in ubiquitin) cross-link. The interval Val-142–Asp-224 is acidic disordered region. Phosphothreonine is present on Thr-143. The disordered stretch occupies residues Glu-144 to Arg-330. Acidic residues-rich tracts occupy residues Pro-145–Glu-157 and Glu-184–Pro-205. At Ser-149 the chain carries Phosphoserine. Residues Ser-231, Ser-248, and Ser-251 each carry the phosphoserine modification. The segment covering Ser-248–Leu-257 has biased composition (polar residues). Basic and acidic residues-rich tracts occupy residues Pro-295–Arg-305 and Pro-316–Arg-330. The RRM domain maps to His-338–Thr-413. Residues Lys-351 and Lys-355 each participate in a glycyl lysine isopeptide (Lys-Gly) (interchain with G-Cter in ubiquitin) cross-link. Ser-371 carries the post-translational modification Phosphoserine. A Glycyl lysine isopeptide (Lys-Gly) (interchain with G-Cter in ubiquitin) cross-link involves residue Lys-374. An N6-acetyllysine; alternate modification is found at Lys-374. Residue Lys-374 forms a Glycyl lysine isopeptide (Lys-Gly) (interchain with G-Cter in SUMO2); alternate linkage. Lys-391 participates in a covalent cross-link: Glycyl lysine isopeptide (Lys-Gly) (interchain with G-Cter in ubiquitin); alternate. The segment at Val-408–Arg-464 is RG-rich region. The segment covering Lys-411–Leu-426 has biased composition (basic and acidic residues). The segment at Lys-411–Gln-465 is disordered. Arg-427 bears the Asymmetric dimethylarginine mark. Positions Gly-428–Arg-445 are enriched in gly residues. Asymmetric dimethylarginine; alternate is present on Arg-433. 4 positions are modified to omega-N-methylarginine; alternate: Arg-433, Arg-445, Arg-458, and Arg-464. Arg-458 bears the Dimethylated arginine; alternate mark.

In terms of assembly, homodimer and oligomer. Component of a TAU mRNP complex, at least composed of IGF2BP1, ELAVL4 and G3BP1. Binds to the SH3 domain of Ras GTPase-activating protein (RASA1) in proliferating cells. No interaction in quiescent cells. Interacts (via NTF2 domain) with USP10; inhibiting stress granule formation by lowering G3BP1 valence. Interacts (via NTF2 domain) with CAPRIN1; promoting stress granule formation by lowering the saturation-concentration of G3BP1. Interacts (via NTF2 domain) with UBAP2L; promoting stress granule formation. Associates (via RG-rich region) with 40S ribosome subunits. Interacts with RPTOR and SPAG5; this complex is increased by oxidative stress. Interacts with ATXN2L. Interacts with STYXL1. Interacts with CGAS (via N-terminus); this interaction promotes the DNA-binding and activation of CGAS. Interacts (via C-terminus) with RIGI. Interacts with PABPC1. Interacts with QKI (isoforms QKI6 and QKI7); directing N(7)-methylguanine-containing mRNAs to stress granules. Mg(2+) serves as cofactor. In terms of processing, phosphorylation of the acidic disordered region regulates stress granule assembly. RASA1-dependent phosphorylation of Ser-149 induces a conformational change that prevents self-association. Dephosphorylation after HRAS activation is required for stress granule assembly. Ser-149 phosphorylation induces partial nuclear localization. Post-translationally, arg-435 is dimethylated, probably to asymmetric dimethylarginine. Ubiquitinated by TRIM21 via 'Lys-63'-linked polyubiquitination in the NTF2 domain in response to heat shock, leading to stress granule disassembly: ubiquitination promotes interaction with the FAF2 adapter, followed by interaction with VCP, which extracts G3BP1 from stress granules, leading to stress granule disassembly. In case of prolonged stress, ubiquitination by TRIM21 leads to autophagy-dependent degradation of G3BP1 via recruitment of ubiquitinated G3BP1 by SQSTM1 and/or CALCOCO2 to autophagosomes. Ubiquitous.

Its subcellular location is the cytoplasm. The protein localises to the cytosol. It localises to the perikaryon. The protein resides in the stress granule. It is found in the nucleus. The catalysed reaction is ATP + H2O = ADP + phosphate + H(+). With respect to regulation, under physiological conditions, G3BP1 adopts a compact state that is stabilized by intramolecular interactions between the RG-rich and the acidic regions that inhibit phase separation. Upon stress, polysomes disassemble and mRNAs are released in an unfolded protein-free state. Binding of unfolded mRNA to G3BP1 outcompetes the intramolecular interactions and RNA-bound G3BP1 adopts an expanded conformation in which the RG-rich region becomes exposed to engage in protein-protein and protein-RNA interactions, allowing physical cross-linking of RNA molecules to form protein-RNA condensates, leading to liquid-liquid phase separation (LLPS). Protein involved in various processes, such as stress granule formation and innate immunity. Plays an essential role in stress granule formation. Stress granules are membraneless compartments that store mRNAs and proteins, such as stalled translation pre-initiation complexes, in response to stress. Promotes formation of stress granules phase-separated membraneless compartment by undergoing liquid-liquid phase separation (LLPS) upon unfolded RNA-binding: functions as a molecular switch that triggers RNA-dependent LLPS in response to a rise in intracellular free RNA concentrations. Also acts as an ATP- and magnesium-dependent helicase: unwinds DNA/DNA, RNA/DNA, and RNA/RNA substrates with comparable efficiency. Acts unidirectionally by moving in the 5' to 3' direction along the bound single-stranded DNA. Unwinds preferentially partial DNA and RNA duplexes having a 17 bp annealed portion and either a hanging 3' tail or hanging tails at both 5'- and 3'-ends. Plays an essential role in innate immunity by promoting CGAS and RIGI activity. Participates in the DNA-triggered cGAS/STING pathway by promoting the DNA binding and activation of CGAS. Triggers the condensation of cGAS, a process probably linked to the formation of membrane-less organelles. Also enhances RIGI-induced type I interferon production probably by helping RIGI at sensing pathogenic RNA. May also act as a phosphorylation-dependent sequence-specific endoribonuclease in vitro: Cleaves exclusively between cytosine and adenine and cleaves MYC mRNA preferentially at the 3'-UTR. The polypeptide is Ras GTPase-activating protein-binding protein 1 (G3bp1) (Mus musculus (Mouse)).